A 240-amino-acid polypeptide reads, in one-letter code: Ribonuclease PH (240 aa).

Phosphate is bound by residues Arg-87 and 125–127; that span reads GTR.

The protein belongs to the RNase PH family. Homohexameric ring arranged as a trimer of dimers.

The enzyme catalyses tRNA(n+1) + phosphate = tRNA(n) + a ribonucleoside 5'-diphosphate. Its function is as follows. Phosphorolytic 3'-5' exoribonuclease that plays an important role in tRNA 3'-end maturation. Removes nucleotide residues following the 3'-CCA terminus of tRNAs; can also add nucleotides to the ends of RNA molecules by using nucleoside diphosphates as substrates, but this may not be physiologically important. Probably plays a role in initiation of 16S rRNA degradation (leading to ribosome degradation) during starvation. This is Ribonuclease PH from Stutzerimonas stutzeri (strain A1501) (Pseudomonas stutzeri).